The following is a 249-amino-acid chain: O-methyltransferase adaD (249 aa).

Positions M1–T15 are enriched in low complexity. Positions M1–Q26 are disordered.

This sequence belongs to the methyltransferase superfamily.

The enzyme catalyses 2-acetyl-3,4a,8,10,11,12a-hexahydroxy-1,4,4a,5,12,12a-hexahydrotetracene-1,12-dione + S-adenosyl-L-methionine = TAN-1612 + S-adenosyl-L-homocysteine + H(+). The protein operates within secondary metabolite biosynthesis. Its function is as follows. O-methyltransferase; part of the gene cluster that mediates the biosynthesis of the linear tetracyclic TAN-1612 neuropeptide Y receptor antagonist. The decaketide backbone of TAN-1612 is synthesized by the non-reducing polyketide synthase adaA via condensation of one acetyl-CoA starter unit with 9 malonyl-CoA units. The FAD-dependent monooxygenase adaC then performs hydroxylation at C2 while the polaketide chain is still attached to the NRPKS adaA. The alpha-hydroxylation step at C2 appears to be crucial for the following C18-C1 Claisen cyclization and release of the C9-hydroxyl version of TAN-1612 from the NRPKS adaA, two steps performed by the lactamase-like protein adaB. Finally, the O-methyltransferase adaD performs the C9 O-methylation to complete the biosynthesis of TAN-1612. This chain is O-methyltransferase adaD, found in Aspergillus niger.